A 923-amino-acid polypeptide reads, in one-letter code: Glucosidase 2 subunit alpha (923 aa).

The signal sequence occupies residues 1–25 (MRYHGICWFIFQAAIIFAIFGSCQG). An N-linked (GlcNAc...) asparagine glycan is attached at N262. D524 acts as the Nucleophile in catalysis. The active site involves E527. N563 carries an N-linked (GlcNAc...) asparagine glycan. The active-site Proton donor is D600. The N-linked (GlcNAc...) asparagine glycan is linked to N822.

This sequence belongs to the glycosyl hydrolase 31 family. In terms of assembly, heterodimer of a catalytic subunit alpha (gls2) and a subunit beta (gtb1).

Its subcellular location is the endoplasmic reticulum. It catalyses the reaction N(4)-(alpha-D-Glc-(1-&gt;3)-alpha-D-Man-(1-&gt;2)-alpha-D-Man-(1-&gt;2)-alpha-D-Man-(1-&gt;3)-[alpha-D-Man-(1-&gt;2)-alpha-D-Man-(1-&gt;3)-[alpha-D-Man-(1-&gt;2)-alpha-D-Man-(1-&gt;6)]-alpha-D-Man-(1-&gt;6)]-beta-D-Man-(1-&gt;4)-beta-D-GlcNAc-(1-&gt;4)-beta-D-GlcNAc)-L-asparaginyl-[protein] + H2O = N(4)-(alpha-D-Man-(1-&gt;2)-alpha-D-Man-(1-&gt;2)-alpha-D-Man-(1-&gt;3)-[alpha-D-Man-(1-&gt;2)-alpha-D-Man-(1-&gt;3)-[alpha-D-Man-(1-&gt;2)-alpha-D-Man-(1-&gt;6)]-alpha-D-Man-(1-&gt;6)]-beta-D-Man-(1-&gt;4)-beta-D-GlcNAc-(1-&gt;4)-beta-D-GlcNAc)-L-asparaginyl-[protein] (N-glucan mannose isomer 9A1,2,3B1,2,3) + beta-D-glucose. The enzyme catalyses N(4)-(alpha-D-Glc-(1-&gt;3)-alpha-D-Glc-(1-&gt;3)-alpha-D-Man-(1-&gt;2)-alpha-D-Man-(1-&gt;2)-alpha-D-Man-(1-&gt;3)-[alpha-D-Man-(1-&gt;2)-alpha-D-Man-(1-&gt;3)-[alpha-D-Man-(1-&gt;2)-alpha-D-Man-(1-&gt;6)]-alpha-D-Man-(1-&gt;6)]-beta-D-Man-(1-&gt;4)-beta-D-GlcNAc-(1-&gt;4)-beta-D-GlcNAc)-L-asparaginyl-[protein] + H2O = N(4)-(alpha-D-Glc-(1-&gt;3)-alpha-D-Man-(1-&gt;2)-alpha-D-Man-(1-&gt;2)-alpha-D-Man-(1-&gt;3)-[alpha-D-Man-(1-&gt;2)-alpha-D-Man-(1-&gt;3)-[alpha-D-Man-(1-&gt;2)-alpha-D-Man-(1-&gt;6)]-alpha-D-Man-(1-&gt;6)]-beta-D-Man-(1-&gt;4)-beta-D-GlcNAc-(1-&gt;4)-beta-D-GlcNAc)-L-asparaginyl-[protein] + beta-D-glucose. The protein operates within glycan metabolism; N-glycan metabolism. In terms of biological role, catalytic subunit of glucosidase 2, which cleaves sequentially the 2 innermost alpha-1,3-linked glucose residues from the Glc(2)Man(9)GlcNAc(2) oligosaccharide precursor of immature glycoproteins. The sequence is that of Glucosidase 2 subunit alpha from Schizosaccharomyces pombe (strain 972 / ATCC 24843) (Fission yeast).